The sequence spans 602 residues: UvrABC system protein C (602 aa).

One can recognise a GIY-YIG domain in the interval 15-92 (DLPGSYQMKD…IQKYQPYYNI (78 aa)). Residues 197–232 (GKAKASLTAKMERAAKNLQFERAAEIRDQLHYIEQT) enclose the UVR domain.

It belongs to the UvrC family. In terms of assembly, interacts with UvrB in an incision complex.

The protein resides in the cytoplasm. Functionally, the UvrABC repair system catalyzes the recognition and processing of DNA lesions. UvrC both incises the 5' and 3' sides of the lesion. The N-terminal half is responsible for the 3' incision and the C-terminal half is responsible for the 5' incision. The sequence is that of UvrABC system protein C from Lacticaseibacillus casei (strain BL23) (Lactobacillus casei).